Consider the following 308-residue polypeptide: MTMPDYDLIAILGPTASGKTPFAAALAAELNTEIISADSRQIYRGMDLGTGKDLEDYTINGRQIPYHLIDIADPGYKYNVFEYQRDFLTAYETIKQKGCLPVLCGGTGLYLESVLKGYRLIPVPENQELRVRLAEKSLEELTAILSSYKTLHNSTDVDTVKRAIRAIEIEEYYAKTPIEEREFPQLNSLIIGVDIDRELRREKITRRLKQRLDDGMVEEVRRLLAEGIQPDDLIYYGLEYKYLTLYAIGKMTYDEMFTGLETAIHQFAKRQMTWFRGMERRGFTIHWVDASLPMEEKINFVKQKLKEF.

Residue 13-20 participates in ATP binding; the sequence is GPTASGKT. 15–20 provides a ligand contact to substrate; that stretch reads TASGKT. The interval 38-41 is interaction with substrate tRNA; the sequence is DSRQ.

Belongs to the IPP transferase family. Monomer. Requires Mg(2+) as cofactor.

The catalysed reaction is adenosine(37) in tRNA + dimethylallyl diphosphate = N(6)-dimethylallyladenosine(37) in tRNA + diphosphate. Its function is as follows. Catalyzes the transfer of a dimethylallyl group onto the adenine at position 37 in tRNAs that read codons beginning with uridine, leading to the formation of N6-(dimethylallyl)adenosine (i(6)A). The protein is tRNA dimethylallyltransferase 2 of Bacteroides fragilis (strain YCH46).